A 505-amino-acid polypeptide reads, in one-letter code: Formate--tetrahydrofolate ligase (505 aa).

The protein belongs to the formate--tetrahydrofolate ligase family.

The catalysed reaction is (6S)-5,6,7,8-tetrahydrofolate + formate + ATP = (6R)-10-formyltetrahydrofolate + ADP + phosphate. It functions in the pathway one-carbon metabolism; tetrahydrofolate interconversion. The protein is Formate--tetrahydrofolate ligase (fhs) of Bifidobacterium longum (strain NCC 2705).